The chain runs to 234 residues: Purine nucleoside phosphorylase DeoD-type (234 aa).

His-4 contacts a purine D-ribonucleoside. Residues Gly-20, Arg-24, Arg-43, and Arg-87–Thr-90 contribute to the phosphate site. Residues Glu-162, Glu-178–Glu-180, and Ser-202–Asp-203 contribute to the a purine D-ribonucleoside site. The active-site Proton donor is the Asp-203.

The protein belongs to the PNP/UDP phosphorylase family. In terms of assembly, homohexamer; trimer of homodimers.

The catalysed reaction is a purine D-ribonucleoside + phosphate = a purine nucleobase + alpha-D-ribose 1-phosphate. It carries out the reaction a purine 2'-deoxy-D-ribonucleoside + phosphate = a purine nucleobase + 2-deoxy-alpha-D-ribose 1-phosphate. Functionally, catalyzes the reversible phosphorolytic breakdown of the N-glycosidic bond in the beta-(deoxy)ribonucleoside molecules, with the formation of the corresponding free purine bases and pentose-1-phosphate. This chain is Purine nucleoside phosphorylase DeoD-type, found in Anoxybacillus flavithermus (strain DSM 21510 / WK1).